A 332-amino-acid polypeptide reads, in one-letter code: Transcription factor ZEB2 (332 aa).

Residues 1–37 (MQSTESFHALPTRSDVEDPNERRKIQNRIAQKKHRQK) form a disordered region. Over residues 14–24 (SDVEDPNERRK) the composition is skewed to basic and acidic residues. One can recognise a bZIP domain in the interval 17-50 (EDPNERRKIQNRIAQKKHRQKMKRRIEELETKVN). Positions 21–43 (ERRKIQNRIAQKKHRQKMKRRIE) are basic motif. A leucine-zipper region spans residues 45 to 52 (LETKVNNQ). The segment at 106-170 (MHDSPRPNQQ…EGSLPTRQHD (65 aa)) is disordered. Polar residues predominate over residues 111 to 134 (RPNQQQRLSVSGMPSSPTSTSNVA). Residues 143-155 (HSSASNHLSSLSL) show a composition bias toward low complexity. The span at 160–170 (TEGSLPTRQHD) shows a compositional bias: polar residues.

It belongs to the bZIP family.

The protein localises to the nucleus. Functionally, transcription factor that specifically controls transcription of the zearalenone biosynthesis cluster genes. The polypeptide is Transcription factor ZEB2 (Gibberella zeae (strain ATCC MYA-4620 / CBS 123657 / FGSC 9075 / NRRL 31084 / PH-1) (Wheat head blight fungus)).